A 554-amino-acid polypeptide reads, in one-letter code: Phospho-2-dehydro-3-deoxyheptonate aldolase 1, chloroplastic (554 aa).

Residues 1 to 39 constitute a chloroplast transit peptide; sequence MSLATSSSMAGGAAVVPRSATATTASAFVTMKRRATAVR. Residues 41-70 form a disordered region; sequence VHAAEPSKNPPVGVPSAAKTSSPSVAAPEK.

This sequence belongs to the class-II DAHP synthase family.

The protein resides in the plastid. It is found in the chloroplast. It carries out the reaction D-erythrose 4-phosphate + phosphoenolpyruvate + H2O = 7-phospho-2-dehydro-3-deoxy-D-arabino-heptonate + phosphate. Its pathway is metabolic intermediate biosynthesis; chorismate biosynthesis; chorismate from D-erythrose 4-phosphate and phosphoenolpyruvate: step 1/7. The chain is Phospho-2-dehydro-3-deoxyheptonate aldolase 1, chloroplastic (DAHPS1) from Oryza sativa subsp. japonica (Rice).